The sequence spans 533 residues: CWF19-like protein 1 homolog (533 aa).

A disordered region spans residues Glu290–Arg314.

Belongs to the CWF19 family.

In Caenorhabditis elegans, this protein is CWF19-like protein 1 homolog.